The chain runs to 305 residues: UDP-3-O-acyl-N-acetylglucosamine deacetylase (305 aa).

Positions 78, 237, and 241 each coordinate Zn(2+). The Proton donor role is filled by His264.

It belongs to the LpxC family. The cofactor is Zn(2+).

The enzyme catalyses a UDP-3-O-[(3R)-3-hydroxyacyl]-N-acetyl-alpha-D-glucosamine + H2O = a UDP-3-O-[(3R)-3-hydroxyacyl]-alpha-D-glucosamine + acetate. It functions in the pathway glycolipid biosynthesis; lipid IV(A) biosynthesis; lipid IV(A) from (3R)-3-hydroxytetradecanoyl-[acyl-carrier-protein] and UDP-N-acetyl-alpha-D-glucosamine: step 2/6. Catalyzes the hydrolysis of UDP-3-O-myristoyl-N-acetylglucosamine to form UDP-3-O-myristoylglucosamine and acetate, the committed step in lipid A biosynthesis. This chain is UDP-3-O-acyl-N-acetylglucosamine deacetylase, found in Burkholderia thailandensis (strain ATCC 700388 / DSM 13276 / CCUG 48851 / CIP 106301 / E264).